The primary structure comprises 161 residues: Large-conductance mechanosensitive channel (161 aa).

2 helical membrane passes run 14-34 (VVDM…VNTL) and 85-105 (GLFL…FILV).

The protein belongs to the MscL family. In terms of assembly, homopentamer.

It localises to the cell inner membrane. In terms of biological role, channel that opens in response to stretch forces in the membrane lipid bilayer. May participate in the regulation of osmotic pressure changes within the cell. In Chlorobium luteolum (strain DSM 273 / BCRC 81028 / 2530) (Pelodictyon luteolum), this protein is Large-conductance mechanosensitive channel.